The following is a 410-amino-acid chain: Elongation factor Tu (410 aa).

The tr-type G domain occupies 10–214 (KPHVNIGTIG…EVDAYIPTPE (205 aa)). A G1 region spans residues 19 to 26 (GHVDHGKT). 19–26 (GHVDHGKT) is a GTP binding site. Threonine 26 lines the Mg(2+) pocket. The interval 60–64 (GITIN) is G2. Residues 81-84 (DCPG) are G3. GTP-binding positions include 81–85 (DCPGH) and 136–139 (NKED). A G4 region spans residues 136 to 139 (NKED). Residues 174 to 176 (SAL) form a G5 region.

The protein belongs to the TRAFAC class translation factor GTPase superfamily. Classic translation factor GTPase family. EF-Tu/EF-1A subfamily. In terms of assembly, monomer.

It localises to the cytoplasm. The enzyme catalyses GTP + H2O = GDP + phosphate + H(+). In terms of biological role, GTP hydrolase that promotes the GTP-dependent binding of aminoacyl-tRNA to the A-site of ribosomes during protein biosynthesis. The polypeptide is Elongation factor Tu (Gloeothece citriformis (strain PCC 7424) (Cyanothece sp. (strain PCC 7424))).